The primary structure comprises 433 residues: Phosphomethylpyrimidine synthase (433 aa).

Substrate is bound by residues N66, M94, Y123, H162, 184–186 (SRG), 225–228 (DALR), and E264. A Zn(2+)-binding site is contributed by H268. Y291 lines the substrate pocket. H332 provides a ligand contact to Zn(2+). C408, C411, and C415 together coordinate [4Fe-4S] cluster.

Belongs to the ThiC family. The cofactor is [4Fe-4S] cluster.

It catalyses the reaction 5-amino-1-(5-phospho-beta-D-ribosyl)imidazole + S-adenosyl-L-methionine = 4-amino-2-methyl-5-(phosphooxymethyl)pyrimidine + CO + 5'-deoxyadenosine + formate + L-methionine + 3 H(+). It functions in the pathway cofactor biosynthesis; thiamine diphosphate biosynthesis. In terms of biological role, catalyzes the synthesis of the hydroxymethylpyrimidine phosphate (HMP-P) moiety of thiamine from aminoimidazole ribotide (AIR) in a radical S-adenosyl-L-methionine (SAM)-dependent reaction. The protein is Phosphomethylpyrimidine synthase of Saccharolobus islandicus (strain M.16.27) (Sulfolobus islandicus).